Consider the following 411-residue polypeptide: Basic leucine zipper 10 (411 aa).

Disordered stretches follow at residues 1–36 (MNSIFSIDDFSDPFWETPPIPLNPDSSKPVTADEVS), 76–99 (SLPSVSGQNDFEDDSRFRDRDSGN), 140–251 (SVKP…NDLK), and 362–411 (NNFA…KCVD). Residues 24–36 (PDSSKPVTADEVS) are compositionally biased toward polar residues. Over residues 89 to 98 (DSRFRDRDSG) the composition is skewed to basic and acidic residues. Composition is skewed to polar residues over residues 146–173 (STSSPETQLQPVQSSPLTQGELGVTSSL) and 183–193 (SMKQVTSGSSR). Ser196 is subject to Phosphoserine. Over residues 196 to 206 (SDDEDLDEENE) the composition is skewed to acidic residues. The 64-residue stretch at 215 to 278 (DVKKSRRMLS…DEAAVGNRIL (64 aa)) folds into the bZIP domain. Residues 217-236 (KKSRRMLSNRESARRSRRRK) are basic motif. The Nuclear localization signal motif lies at 219 to 226 (SRRMLSNR). The interval 243–257 (LETQVNDLKGEHSSL) is leucine-zipper. Residues 368-390 (PSQTSSPLQRIRNGQNHHVTPSA) show a composition bias toward polar residues.

This sequence belongs to the bZIP family. As to quaternary structure, forms a heterodimer with BZIP1, BZIP2, BZIP9, BZIP11, BZIP44, BZIP53 and BZIP63. Interacts with ABI3 and forms a complex made of ABI3, BZIP53 and BZIP10. Binding with LSD1 leads to cytoplasmic retention. In terms of tissue distribution, expressed in roots, shoots, stems, young leaves, trichomes, hydathodes, siliques, seeds, and flowers, mostly in vascular tissues.

It localises to the nucleus. Its subcellular location is the cytoplasm. Transcription factor that binds to the C-box-like motif (5'-TGCTGACGTCA-3') and G-box-like motif (5'-CCACGTGGCC-3'), ABRE elements, of gene promoters. Binds to the 5'-ACGT-3' motif of seed storage protein (SSP) encoding gene promoters (e.g. At2S and CRU3) and promotes their expression in seeds when in complex with ABI3 and BZIP53. Involved in the defense responses to the biotrophic pathogen Hyaloperonospora parasitica and oxidative stress responses; mediates positively cell death. Promotes BZIP53-mediated response to hypoosmolarity stress that leads to POX1/PRODH1 accumulation. This is Basic leucine zipper 10 (BZIP10) from Arabidopsis thaliana (Mouse-ear cress).